The primary structure comprises 103 residues: Large ribosomal subunit protein bL21 (103 aa).

The protein belongs to the bacterial ribosomal protein bL21 family. As to quaternary structure, part of the 50S ribosomal subunit. Contacts protein L20.

In terms of biological role, this protein binds to 23S rRNA in the presence of protein L20. This chain is Large ribosomal subunit protein bL21, found in Desulforudis audaxviator (strain MP104C).